Here is a 641-residue protein sequence, read N- to C-terminus: DNA mismatch repair protein MutL (641 aa).

The segment at 345–445 (PAAVAPPAPA…GDTSLGDTSP (101 aa)) is disordered. A compositionally biased stretch (basic and acidic residues) spans 419–429 (PRTEPATRTGE). The span at 432–442 (GISSGDTSLGD) shows a compositional bias: polar residues.

Belongs to the DNA mismatch repair MutL/HexB family.

In terms of biological role, this protein is involved in the repair of mismatches in DNA. It is required for dam-dependent methyl-directed DNA mismatch repair. May act as a 'molecular matchmaker', a protein that promotes the formation of a stable complex between two or more DNA-binding proteins in an ATP-dependent manner without itself being part of a final effector complex. The chain is DNA mismatch repair protein MutL from Azotobacter vinelandii (strain DJ / ATCC BAA-1303).